Here is a 551-residue protein sequence, read N- to C-terminus: Vacuolar protein sorting-associated protein 17 (551 aa).

A disordered region spans residues 1-100 (MTSAVPYDPY…SERVILPERS (100 aa)). Polar residues-rich tracts occupy residues 29–39 (AATTTDGSSSM) and 46–64 (TEQTAASVQDNGTANNIQN). Residues 108-227 (LLAKVTGLER…FFIESDFNTY (120 aa)) form the PX domain. Residues 359 to 385 (IMRNLVQAQQNSKAKQEQARRFRSRRD) are a coiled coil. Residues 474-504 (RLGRHAVSNNNSDTSQTLKGDSWTGESNRKS) form a disordered region. Positions 480–504 (VSNNNSDTSQTLKGDSWTGESNRKS) are enriched in polar residues. At serine 544 the chain carries Phosphoserine.

This sequence belongs to the VPS17 family. In terms of assembly, component of the retromer complex which consists of VPS29, VPS26, VPS35, VPS5 and VPS17. Component of a retromer subcomplex consisting of VPS5 and VPS17. In terms of processing, phosphorylated on one or more serine residues.

Its subcellular location is the endomembrane system. In terms of biological role, component of the membrane-associated retromer complex which is essential in endosome-to-Golgi retrograde transport. The VPS5-VPS17 subcomplex may assemble onto the membrane to promote vesicle formation and is required for recycling the vacuolar protein-sorting receptor. Required for the sorting and delivery of a subset of soluble vacuolar hydrolases. Required for retention of late Golgi membrane proteins and vacuolar biogenesis. Involved in vacuolar fragmentation during hyperosmotic stress. The sequence is that of Vacuolar protein sorting-associated protein 17 from Saccharomyces cerevisiae (strain ATCC 204508 / S288c) (Baker's yeast).